We begin with the raw amino-acid sequence, 143 residues long: uncharacterized protein (143 aa).

The segment at 111–143 (VTQDISHTSGKSPTPKAKSSSPKKSKKKNWIPL) is disordered. Over residues 119–130 (SGKSPTPKAKSS) the composition is skewed to low complexity. The span at 131–143 (SPKKSKKKNWIPL) shows a compositional bias: basic residues.

Belongs to the chlamydial CPn_0742/CT_635/TC_0003 family.

This is an uncharacterized protein from Chlamydia muridarum (strain MoPn / Nigg).